The following is a 327-amino-acid chain: Aquaporin-1 (327 aa).

The segment at 1-34 is disordered; sequence MSSNDSNDTDKQHTRLDPTGVDDAYIPPEQPETK. At 1–48 the chain is on the cytoplasmic side; the sequence is MSSNDSNDTDKQHTRLDPTGVDDAYIPPEQPETKHHRFKISKDTLRNH. The chain crosses the membrane as a helical span at residues 49 to 69; the sequence is FIAAAGEFCGTFMFLWCAYVI. Over 70 to 91 the chain is Extracellular; that stretch reads CNVANHDVALVAAPDGSHPGQL. A helical membrane pass occupies residues 92–112; that stretch reads IMIAIGFGFSVMFSIWCFAGV. The Cytoplasmic portion of the chain corresponds to 113 to 136; it reads SGGALNPAVSLSLCLARAVSPTRC. Residues 118–120 carry the NPA 1 motif; the sequence is NPA. Residues 137 to 157 traverse the membrane as a helical segment; sequence VVMWVSQIVAGMAAGGAASAM. The Extracellular segment spans residues 158-176; the sequence is TPGEVLFANSLGLGCSRTR. A helical membrane pass occupies residues 177–197; that stretch reads GLFLEMFGTAILCLTVLMTAV. At 198-203 the chain is on the cytoplasmic side; it reads EKRETN. A helical membrane pass occupies residues 204–224; it reads FMAALPIGISLFIAHVALTAY. Residues 225 to 248 lie on the Extracellular side of the membrane; it reads TGTGVNPARSLGAAVAARYFPHYH. The NPA 2 signature appears at 230 to 232; that stretch reads NPA. Residues 249–269 form a helical membrane-spanning segment; the sequence is WIYWIGPLLGSILAWSVWQLL. At 270–327 the chain is on the cytoplasmic side; it reads QILDYTTYVTAEKAASTKEKAQKKVKPAVPLLWLKSNFSLLFFISRSLALNVIIFGKN.

The protein belongs to the MIP/aquaporin (TC 1.A.8) family.

It is found in the endoplasmic reticulum membrane. The protein resides in the cell membrane. Functionally, water channel required to facilitate the transport of water across membranes. Involved in sporulation, freeze tolerance and osmotolerance. Is non-functional in most laboratory strains. This Saccharomyces cerevisiae (strain Lalvin EC1118 / Prise de mousse) (Baker's yeast) protein is Aquaporin-1 (AQY1).